Reading from the N-terminus, the 270-residue chain is MAFSRTHSLLARAGSTSTYKRVWRYWYPLMTRGLGNDEIVFINWAYEEDPPMDLPLEASDEPNRAHINLYHRTATQVDLGGKQVLEVSCGHGGGASYLTRTLHPASYTGLDLNQAGIKLCKKRHRLPGLDFVRGDAENLPFDDESFDVVLNVEASHCYPHFRRFLAEVVRVLRPGGYFPYADLRPNNEIAAWEADLAATPLRQLSQRQINAEVLRGIGNNSQKSRDLVDRHLPAFLRFAGREFIGVQGTQLSRYLEGGELSYRMYCFTKD.

Belongs to the methyltransferase superfamily. Phthiotriol/phenolphthiotriol dimycocerosates methyltransferase family.

Its function is as follows. Catalyzes the methylation of the lipid moiety of the intermediate compounds phthiotriol and glycosylated phenolphthiotriol dimycoserosates to form phthiocerol dimycocerosates (DIM A) and glycosylated phenolphthiocerol dimycocerosates (PGL). This chain is Phthiotriol/phenolphthiotriol dimycocerosates methyltransferase, found in Mycobacterium bovis (strain ATCC BAA-935 / AF2122/97).